The following is a 636-amino-acid chain: 1-deoxy-D-xylulose-5-phosphate synthase (636 aa).

Thiamine diphosphate contacts are provided by residues His-84 and 125 to 127; that span reads GHS. A Mg(2+)-binding site is contributed by Asp-156. Residues 157-158, Asn-185, Phe-292, and Glu-375 each bind thiamine diphosphate; that span reads GA. Asn-185 is a binding site for Mg(2+).

The protein belongs to the transketolase family. DXPS subfamily. In terms of assembly, homodimer. The cofactor is Mg(2+). Requires thiamine diphosphate as cofactor.

It carries out the reaction D-glyceraldehyde 3-phosphate + pyruvate + H(+) = 1-deoxy-D-xylulose 5-phosphate + CO2. Its pathway is metabolic intermediate biosynthesis; 1-deoxy-D-xylulose 5-phosphate biosynthesis; 1-deoxy-D-xylulose 5-phosphate from D-glyceraldehyde 3-phosphate and pyruvate: step 1/1. Its function is as follows. Catalyzes the acyloin condensation reaction between C atoms 2 and 3 of pyruvate and glyceraldehyde 3-phosphate to yield 1-deoxy-D-xylulose-5-phosphate (DXP). The protein is 1-deoxy-D-xylulose-5-phosphate synthase of Cellvibrio japonicus (strain Ueda107) (Pseudomonas fluorescens subsp. cellulosa).